An 890-amino-acid polypeptide reads, in one-letter code: Protein FAM171A1 (890 aa).

The N-terminal stretch at 1–21 (MSRSATLLLCLLGCHVWKAVT) is a signal peptide. The Extracellular portion of the chain corresponds to 22–303 (KTLREPGAGA…VTQDITTYHT (282 aa)). N-linked (GlcNAc...) asparagine glycosylation is found at N159, N190, and N194. The chain crosses the membrane as a helical span at residues 304–324 (VFLLAILGGMAFILLVLLCLL). Topologically, residues 325-890 (LYYCRRKCLK…ERPLMAFNIK (566 aa)) are cytoplasmic. Phosphoserine occurs at positions 358, 360, 371, 422, 443, and 525. 2 disordered regions span residues 730 to 759 (AGRNGSNDASLDSGVDMNEPKSARKGRGDA) and 818 to 890 (EGSS…FNIK). The span at 747 to 757 (NEPKSARKGRG) shows a compositional bias: basic and acidic residues. The segment covering 822-833 (RRSGGQLPSLQE) has biased composition (polar residues). A phosphoserine mark is found at S849 and S855. Positions 858–869 (EEEEDDDDDDQG) are enriched in acidic residues. Over residues 870–883 (EDKKSPWQKREERP) the composition is skewed to basic and acidic residues.

This sequence belongs to the FAM171 family. Interacts with ADAM10, NSG1 and OAZ1. Expressed in heart, brain, liver, skeletal muscle, kidney and pancreas. In brain, expressed by glia, pyramidal neurons and astrocytes (at protein level). Highly expressed in placental trophoblasts.

It is found in the cell membrane. Its function is as follows. Involved in the regulation of the cytoskeletal dynamics, plays a role in actin stress fiber formation. This chain is Protein FAM171A1, found in Homo sapiens (Human).